The following is a 360-amino-acid chain: Glycerol-1-phosphate dehydrogenase [NAD(P)+] (360 aa).

Residues 108–112 and 130–133 contribute to the NAD(+) site; these read GRVID and TAAS. D135 contacts substrate. Residue S139 participates in NAD(+) binding. Position 182 (D182) interacts with substrate. Zn(2+) is bound by residues D182 and H262. Residue H266 participates in substrate binding. Position 278 (H278) interacts with Zn(2+).

It belongs to the glycerol-1-phosphate dehydrogenase family. It depends on Zn(2+) as a cofactor.

Its subcellular location is the cytoplasm. It carries out the reaction sn-glycerol 1-phosphate + NAD(+) = dihydroxyacetone phosphate + NADH + H(+). The enzyme catalyses sn-glycerol 1-phosphate + NADP(+) = dihydroxyacetone phosphate + NADPH + H(+). Its pathway is membrane lipid metabolism; glycerophospholipid metabolism. Functionally, catalyzes the NAD(P)H-dependent reduction of dihydroxyacetonephosphate (DHAP or glycerone phosphate) to glycerol 1-phosphate (G1P). The G1P thus generated is used as the glycerophosphate backbone of phospholipids in the cellular membranes of Archaea. The protein is Glycerol-1-phosphate dehydrogenase [NAD(P)+] of Methanoculleus marisnigri (strain ATCC 35101 / DSM 1498 / JR1).